Reading from the N-terminus, the 126-residue chain is Probable 4-amino-4-deoxy-L-arabinose-phosphoundecaprenol flippase subunit ArnF (126 aa).

A helical transmembrane segment spans residues 1–21 (MGFFWALLSVGLVSAAQLLLR). Residues 22–47 (SAMVALPPLTDIVAFLQHLLHFQPGT) lie on the Periplasmic side of the membrane. A helical membrane pass occupies residues 48-68 (FGLFFGLLGYLLSMVCWYFAL). Topologically, residues 69–76 (HRLPLSKA) are cytoplasmic. A helical transmembrane segment spans residues 77–97 (YALLSLSYILVWAAAIWLPGW). At 98 to 100 (HEP) the chain is on the periplasmic side. A helical membrane pass occupies residues 101–121 (FYWQSLLGVAIIVAGVLTIFW). Residues 122 to 126 (PVKRR) are Cytoplasmic-facing.

It belongs to the ArnF family. Heterodimer of ArnE and ArnF.

It localises to the cell inner membrane. The protein operates within bacterial outer membrane biogenesis; lipopolysaccharide biosynthesis. Translocates 4-amino-4-deoxy-L-arabinose-phosphoundecaprenol (alpha-L-Ara4N-phosphoundecaprenol) from the cytoplasmic to the periplasmic side of the inner membrane. This chain is Probable 4-amino-4-deoxy-L-arabinose-phosphoundecaprenol flippase subunit ArnF, found in Klebsiella pneumoniae subsp. pneumoniae (strain ATCC 700721 / MGH 78578).